The sequence spans 457 residues: Argininosuccinate lyase (457 aa).

It belongs to the lyase 1 family. Argininosuccinate lyase subfamily.

The protein localises to the cytoplasm. It carries out the reaction 2-(N(omega)-L-arginino)succinate = fumarate + L-arginine. Its pathway is amino-acid biosynthesis; L-arginine biosynthesis; L-arginine from L-ornithine and carbamoyl phosphate: step 3/3. The chain is Argininosuccinate lyase from Serratia proteamaculans (strain 568).